Here is a 209-residue protein sequence, read N- to C-terminus: Guanylate kinase (209 aa).

Residues 8–186 (GVLYIVSAPS…ALQDLVAITR (179 aa)) enclose the Guanylate kinase-like domain. 15–22 (APSGAGKT) serves as a coordination point for ATP.

The protein belongs to the guanylate kinase family.

The protein resides in the cytoplasm. It carries out the reaction GMP + ATP = GDP + ADP. Its function is as follows. Essential for recycling GMP and indirectly, cGMP. This Thiobacillus denitrificans (strain ATCC 25259 / T1) protein is Guanylate kinase.